The following is a 445-amino-acid chain: Na(+)-translocating NADH-quinone reductase subunit A (445 aa).

This sequence belongs to the NqrA family. As to quaternary structure, composed of six subunits; NqrA, NqrB, NqrC, NqrD, NqrE and NqrF.

It carries out the reaction a ubiquinone + n Na(+)(in) + NADH + H(+) = a ubiquinol + n Na(+)(out) + NAD(+). NQR complex catalyzes the reduction of ubiquinone-1 to ubiquinol by two successive reactions, coupled with the transport of Na(+) ions from the cytoplasm to the periplasm. NqrA to NqrE are probably involved in the second step, the conversion of ubisemiquinone to ubiquinol. This Pseudomonas aeruginosa (strain UCBPP-PA14) protein is Na(+)-translocating NADH-quinone reductase subunit A.